The chain runs to 282 residues: MYFKRYLQLAKPGIIFGNLITLTGGFLLATHREIGFEYLPLFVYVMIGVALMIAAGCVFNNIYDKDIDSSMTRTQNRPLVTGDISVIQATIYGTILLILSCLVLYYLVNLLTLWIIIIGFIVYVGIYTVSKRLTIHATVLGGISGAIPPVAGYTAVVNILDYNALALFLILFFWQIPHSYAIAMLYIDDYKKVKLPMLPIVKGIAYTKKIMLFYLALFVVSCALPAVLGSADLFSFIVCMLVALFWMYKSIQSYRTDTDRVFAKTVFKFSIIVITAICLTMG.

9 helical membrane passes run 9–29, 39–59, 79–99, 102–122, 139–159, 165–185, 210–230, 231–251, and 261–281; these read LAKPGIIFGNLITLTGGFLLA, LPLFVYVMIGVALMIAAGCVF, LVTGDISVIQATIYGTILLIL, LVLYYLVNLLTLWIIIIGFIV, VLGGISGAIPPVAGYTAVVNI, LALFLILFFWQIPHSYAIAML, IMLFYLALFVVSCALPAVLGS, ADLFSFIVCMLVALFWMYKSI, and VFAKTVFKFSIIVITAICLTM.

Belongs to the UbiA prenyltransferase family. Protoheme IX farnesyltransferase subfamily.

Its subcellular location is the cell inner membrane. It catalyses the reaction heme b + (2E,6E)-farnesyl diphosphate + H2O = Fe(II)-heme o + diphosphate. It participates in porphyrin-containing compound metabolism; heme O biosynthesis; heme O from protoheme: step 1/1. Functionally, converts heme B (protoheme IX) to heme O by substitution of the vinyl group on carbon 2 of heme B porphyrin ring with a hydroxyethyl farnesyl side group. The sequence is that of Protoheme IX farnesyltransferase from Francisella tularensis subsp. novicida (strain U112).